The chain runs to 179 residues: Diphosphoinositol polyphosphate phosphohydrolase 2 (179 aa).

Residues arginine 9, lysine 17–arginine 19, and serine 38–arginine 40 contribute to the substrate site. Residues lysine 17–lysine 143 enclose the Nudix hydrolase domain. Mg(2+) is bound by residues glycine 49 and glutamate 65. The short motif at glycine 50 to glycine 71 is the Nudix box element. Residue glutamate 68 is the Proton acceptor of the active site. Glutamate 69 serves as a coordination point for Mg(2+). Substrate contacts are provided by residues arginine 88 to histidine 90, arginine 114, and lysine 132.

The protein belongs to the Nudix hydrolase family. DIPP subfamily. Mg(2+) serves as cofactor. Requires Mn(2+) as cofactor.

Its subcellular location is the cytoplasm. The enzyme catalyses diphospho-myo-inositol polyphosphate + H2O = myo-inositol polyphosphate + phosphate.. It carries out the reaction 5-diphospho-1D-myo-inositol 1,2,3,4,6-pentakisphosphate + H2O = 1D-myo-inositol hexakisphosphate + phosphate + H(+). It catalyses the reaction 3,5-bis(diphospho)-1D-myo-inositol 1,2,4,6-tetrakisphosphate + H2O = 3-diphospho-1D-myo-inositol 1,2,4,5,6-pentakisphosphate + phosphate + 2 H(+). The catalysed reaction is 5-diphospho-1D-myo-inositol 1,3,4,6-tetrakisphosphate + H2O = 1D-myo-inositol 1,3,4,5,6-pentakisphosphate + phosphate + H(+). The enzyme catalyses P(1),P(6)-bis(5'-adenosyl) hexaphosphate + H2O = 2 ATP + 2 H(+). It carries out the reaction P(1),P(5)-bis(5'-adenosyl) pentaphosphate + H2O = ADP + ATP + 2 H(+). It catalyses the reaction 5-phospho-alpha-D-ribose 1-diphosphate + H2O = alpha-D-ribose 1,5-bisphosphate + phosphate + H(+). Functionally, cleaves the beta-phosphate from diphosphoinositol polyphosphates such as PP-InsP5 (diphosphoinositol pentakisphosphate), PP-InsP4 (diphosphoinositol tetrakisphosphate) and [PP]2-InsP4 (bisdiphosphoinositol tetrakisphosphate), suggesting that it may play a role in signal transduction. Diadenosine polyphosphates, particularly Ap6A (P(1),P(6)-bis(5a-adenosyl) hexaphosphate) and Ap5A (P(1),P(5)-bis(5'-adenosyl) pentaphosphate) are downstream effectors of a signaling cascade that regulates cardiac KATP channels, can also be substrates, although with lower preference than the diphosphoinositol polyphosphates. Can also catalyze the hydrolysis of 5-phosphoribose 1-diphosphate, generating the glycolytic activator ribose 1,5-bisphosphate. Does not play a role in U8 snoRNA decapping activity. Binds U8 snoRNA. This is Diphosphoinositol polyphosphate phosphohydrolase 2 from Rattus norvegicus (Rat).